Consider the following 273-residue polypeptide: Dermonecrotic toxin LdSicTox-alphaIB1bi (273 aa).

H5 is an active-site residue. Mg(2+) contacts are provided by E25 and D27. The Nucleophile role is filled by H41. 2 disulfide bridges follow: C45–C51 and C47–C190. A Mg(2+)-binding site is contributed by D85. N250 carries N-linked (GlcNAc...) asparagine glycosylation.

It belongs to the arthropod phospholipase D family. Class II subfamily. It depends on Mg(2+) as a cofactor. Expressed by the venom gland.

It localises to the secreted. It carries out the reaction an N-(acyl)-sphingosylphosphocholine = an N-(acyl)-sphingosyl-1,3-cyclic phosphate + choline. The enzyme catalyses an N-(acyl)-sphingosylphosphoethanolamine = an N-(acyl)-sphingosyl-1,3-cyclic phosphate + ethanolamine. It catalyses the reaction a 1-acyl-sn-glycero-3-phosphocholine = a 1-acyl-sn-glycero-2,3-cyclic phosphate + choline. The catalysed reaction is a 1-acyl-sn-glycero-3-phosphoethanolamine = a 1-acyl-sn-glycero-2,3-cyclic phosphate + ethanolamine. In terms of biological role, dermonecrotic toxins cleave the phosphodiester linkage between the phosphate and headgroup of certain phospholipids (sphingolipid and lysolipid substrates), forming an alcohol (often choline) and a cyclic phosphate. This toxin acts on sphingomyelin (SM). It may also act on ceramide phosphoethanolamine (CPE), lysophosphatidylcholine (LPC) and lysophosphatidylethanolamine (LPE), but not on lysophosphatidylserine (LPS), and lysophosphatidylglycerol (LPG). It acts by transphosphatidylation, releasing exclusively cyclic phosphate products as second products. Induces dermonecrosis, hemolysis, increased vascular permeability, edema, inflammatory response, and platelet aggregation. The sequence is that of Dermonecrotic toxin LdSicTox-alphaIB1bi from Loxosceles deserta (Desert recluse spider).